Here is a 51-residue protein sequence, read N- to C-terminus: Putative inactivation escape 1 protein (51 aa).

Highly expressed in pancreas, heart and liver followed by brain, placenta, lung, skeletal muscle and kidney. Mostly expressed in females.

This is Putative inactivation escape 1 protein (INE1) from Homo sapiens (Human).